A 173-amino-acid chain; its full sequence is MPKAVFGGGCFWCLDAVFRKVDGVRDVVVGYAGGRRPNPNYEQVCTGVTGHAEVVEIDYDENTVSYDELLDIFFKIHDPTQLNRQGNDVGTQYRSIILYLDEEQKEKALKKIEELKKEGLNVVTEVKPLEIFYPAEKYHQNYFAKNPHQPYCMYVVAPKVEKYLKIKNENKKT.

Residue Cys10 is part of the active site.

The protein belongs to the MsrA Met sulfoxide reductase family.

It carries out the reaction L-methionyl-[protein] + [thioredoxin]-disulfide + H2O = L-methionyl-(S)-S-oxide-[protein] + [thioredoxin]-dithiol. It catalyses the reaction [thioredoxin]-disulfide + L-methionine + H2O = L-methionine (S)-S-oxide + [thioredoxin]-dithiol. Its function is as follows. Has an important function as a repair enzyme for proteins that have been inactivated by oxidation. Catalyzes the reversible oxidation-reduction of methionine sulfoxide in proteins to methionine. This is Peptide methionine sulfoxide reductase MsrA from Nautilia profundicola (strain ATCC BAA-1463 / DSM 18972 / AmH).